We begin with the raw amino-acid sequence, 200 residues long: Recombination protein RecR (200 aa).

The C4-type zinc-finger motif lies at 58–73; the sequence is CEVCHNLAEEGLCAIC. Residues 81 to 176 form the Toprim domain; that stretch reads GLICVVEEPV…DISRLAYGMP (96 aa).

Belongs to the RecR family.

Its function is as follows. May play a role in DNA repair. It seems to be involved in an RecBC-independent recombinational process of DNA repair. It may act with RecF and RecO. The chain is Recombination protein RecR from Magnetococcus marinus (strain ATCC BAA-1437 / JCM 17883 / MC-1).